The sequence spans 214 residues: Response regulator GacA (214 aa).

Positions Lys-3–Phe-119 constitute a Response regulatory domain. At Asp-54 the chain carries 4-aspartylphosphate. Residues His-143–Gly-208 enclose the HTH luxR-type domain. Residues Val-167–Tyr-186 constitute a DNA-binding region (H-T-H motif).

Positively controls the production of the autoinducer N-butyryl-homoserine lactone and the formation of the virulence factors pyocyanine, cyanide, and lipase. In Pseudomonas aeruginosa (strain ATCC 15692 / DSM 22644 / CIP 104116 / JCM 14847 / LMG 12228 / 1C / PRS 101 / PAO1), this protein is Response regulator GacA (gacA).